We begin with the raw amino-acid sequence, 660 residues long: Bifunctional polymyxin resistance protein ArnA (660 aa).

The interval 1 to 304 is formyltransferase ArnAFT; it reads MKAVIFAYHD…TLGLVAGARL (304 aa). Residue histidine 104 is the Proton donor; for formyltransferase activity of the active site. Residues arginine 114 and 136-140 each bind (6R)-10-formyltetrahydrofolate; that span reads VKRAD. The segment at 314-660 is dehydrogenase ArnADH; the sequence is RRIRVLILGV…RSVDVAERAS (347 aa). Residues aspartate 347 and 368-369 each bind NAD(+); that span reads DI. Residues alanine 393, tyrosine 398, and 432-433 each bind UDP-alpha-D-glucuronate; that span reads TS. Catalysis depends on glutamate 434, which acts as the Proton acceptor; for decarboxylase activity. UDP-alpha-D-glucuronate contacts are provided by residues arginine 460, asparagine 492, 526-535, and tyrosine 613; that span reads KLIDGGQQKR. The Proton donor; for decarboxylase activity role is filled by arginine 619.

It in the N-terminal section; belongs to the Fmt family. UDP-L-Ara4N formyltransferase subfamily. This sequence in the C-terminal section; belongs to the NAD(P)-dependent epimerase/dehydratase family. UDP-glucuronic acid decarboxylase subfamily. In terms of assembly, homohexamer, formed by a dimer of trimers.

It carries out the reaction UDP-alpha-D-glucuronate + NAD(+) = UDP-beta-L-threo-pentopyranos-4-ulose + CO2 + NADH. The enzyme catalyses UDP-4-amino-4-deoxy-beta-L-arabinose + (6R)-10-formyltetrahydrofolate = UDP-4-deoxy-4-formamido-beta-L-arabinose + (6S)-5,6,7,8-tetrahydrofolate + H(+). It functions in the pathway nucleotide-sugar biosynthesis; UDP-4-deoxy-4-formamido-beta-L-arabinose biosynthesis; UDP-4-deoxy-4-formamido-beta-L-arabinose from UDP-alpha-D-glucuronate: step 1/3. Its pathway is nucleotide-sugar biosynthesis; UDP-4-deoxy-4-formamido-beta-L-arabinose biosynthesis; UDP-4-deoxy-4-formamido-beta-L-arabinose from UDP-alpha-D-glucuronate: step 3/3. The protein operates within bacterial outer membrane biogenesis; lipopolysaccharide biosynthesis. Bifunctional enzyme that catalyzes the oxidative decarboxylation of UDP-glucuronic acid (UDP-GlcUA) to UDP-4-keto-arabinose (UDP-Ara4O) and the addition of a formyl group to UDP-4-amino-4-deoxy-L-arabinose (UDP-L-Ara4N) to form UDP-L-4-formamido-arabinose (UDP-L-Ara4FN). The modified arabinose is attached to lipid A and is required for resistance to polymyxin and cationic antimicrobial peptides. In Salmonella paratyphi B (strain ATCC BAA-1250 / SPB7), this protein is Bifunctional polymyxin resistance protein ArnA.